The following is a 190-amino-acid chain: Probable nicotinate-nucleotide adenylyltransferase (190 aa).

This sequence belongs to the NadD family.

The enzyme catalyses nicotinate beta-D-ribonucleotide + ATP + H(+) = deamido-NAD(+) + diphosphate. The protein operates within cofactor biosynthesis; NAD(+) biosynthesis; deamido-NAD(+) from nicotinate D-ribonucleotide: step 1/1. In terms of biological role, catalyzes the reversible adenylation of nicotinate mononucleotide (NaMN) to nicotinic acid adenine dinucleotide (NaAD). In Borrelia turicatae (strain 91E135), this protein is Probable nicotinate-nucleotide adenylyltransferase.